Reading from the N-terminus, the 713-residue chain is Endopolyphosphatase (713 aa).

Residues 1–19 lie on the Cytoplasmic side of the membrane; the sequence is MSVLIDEKSHRSSGSTRSR. A helical; Signal-anchor for type II membrane protein transmembrane segment spans residues 20 to 40; the sequence is IVVTVVGVLLMVSGLAVMLGH. Over 41–713 the chain is Vacuolar; sequence QSGSANEALG…SSEYENMGMG (673 aa). Over residues 399–418 the composition is skewed to acidic residues; it reads SDDDDNSDSDSDDDDEDTSL. A disordered region spans residues 399-430; the sequence is SDDDDNSDSDSDDDDEDTSLEESYSNFNSPIL. N-linked (GlcNAc...) asparagine glycosylation is found at Asn507 and Asn645. The segment covering 640-659 has biased composition (basic residues); sequence VKEKKNKSNKKSKKKKKNKD. The disordered stretch occupies residues 640 to 684; sequence VKEKKNKSNKKSKKKKKNKDKRLLENSEPLKQDGSKDSRLEQDRV. Residues 660–683 show a composition bias toward basic and acidic residues; it reads KRLLENSEPLKQDGSKDSRLEQDR.

The protein belongs to the endopolyphosphatase PPN1 family. A divalent metal cation is required as a cofactor. Post-translationally, processing by proteases in the vacuole may be required for activation.

It localises to the vacuole membrane. The enzyme catalyses [phosphate](n+1) + n H2O = (n+1) phosphate + n H(+). Functionally, catalyzes the hydrolysis of inorganic polyphosphate (polyP) chains of many hundreds of phosphate residues into shorter lengths. The chain is Endopolyphosphatase (PPN1) from Debaryomyces hansenii (strain ATCC 36239 / CBS 767 / BCRC 21394 / JCM 1990 / NBRC 0083 / IGC 2968) (Yeast).